The chain runs to 358 residues: 3-isopropylmalate dehydrogenase (358 aa).

75-88 lines the NAD(+) pocket; the sequence is GPKWETLPPEKQPE. Arginine 96, arginine 106, arginine 135, and aspartate 225 together coordinate substrate. 3 residues coordinate Mg(2+): aspartate 225, aspartate 249, and aspartate 253. Residue 283-295 participates in NAD(+) binding; it reads GSAPDIAGKGVAN.

This sequence belongs to the isocitrate and isopropylmalate dehydrogenases family. LeuB type 1 subfamily. As to quaternary structure, homodimer. Mg(2+) serves as cofactor. Requires Mn(2+) as cofactor.

It is found in the cytoplasm. The enzyme catalyses (2R,3S)-3-isopropylmalate + NAD(+) = 4-methyl-2-oxopentanoate + CO2 + NADH. It functions in the pathway amino-acid biosynthesis; L-leucine biosynthesis; L-leucine from 3-methyl-2-oxobutanoate: step 3/4. Catalyzes the oxidation of 3-carboxy-2-hydroxy-4-methylpentanoate (3-isopropylmalate) to 3-carboxy-4-methyl-2-oxopentanoate. The product decarboxylates to 4-methyl-2 oxopentanoate. This Leptospira interrogans serogroup Icterohaemorrhagiae serovar copenhageni (strain Fiocruz L1-130) protein is 3-isopropylmalate dehydrogenase.